Here is an 813-residue protein sequence, read N- to C-terminus: Sodium/hydrogen exchanger 2 (813 aa).

7 helical membrane-spanning segments follow: residues 108 to 128 (IVPE…IIFG), 139 to 159 (TDVF…YFMP), 170 to 190 (IFWY…LSLF), 210 to 230 (LFGS…FENI), 238 to 258 (ILVF…YNLF), 279 to 299 (FFVV…IAAF), and 309 to 329 (VIEP…AEMF). A glycan (N-linked (GlcNAc...) asparagine) is linked at asparagine 351. 4 helical membrane passes run 362 to 382 (YFMK…MGVS), 393 to 413 (AFVC…VFVL), 431 to 451 (FIIA…FLLP), and 460 to 480 (LFIT…GITI). Residues 649–661 (LRKDNSLNRERRA) show a composition bias toward basic and acidic residues. Disordered stretches follow at residues 649–709 (LRKD…NLQP) and 736–813 (DVGS…NEKP). A compositionally biased stretch (polar residues) spans 687–696 (VSNADGNSSD). Composition is skewed to basic and acidic residues over residues 770 to 781 (KDQRFGRGREDS) and 797 to 813 (RASE…NEKP).

Belongs to the monovalent cation:proton antiporter 1 (CPA1) transporter (TC 2.A.36) family. As to quaternary structure, interacts with CHP1 and CHP2. Predominantly in small intestine, colon, and stomach, with much lower levels in skeletal muscle, kidney, brain, testis, uterus, heart and lung.

It localises to the apical cell membrane. The catalysed reaction is Na(+)(in) + H(+)(out) = Na(+)(out) + H(+)(in). With respect to regulation, li(+) activates Na(+)/H(+) exchanger. Its function is as follows. Plasma membrane Na(+)/H(+) antiporter. Mediates the electroneutral exchange of intracellular H(+) ions for extracellular Na(+). Major apical Na(+)/H(+) exchanger in the base of the colonic crypt. Controls in the colonic crypt intracellular pH (pHi) to direct colonic epithelial cell differentiation into the absorptive enterocyte lineage at the expense of the secretory lineage. The chain is Sodium/hydrogen exchanger 2 (Slc9a2) from Rattus norvegicus (Rat).